The following is a 259-amino-acid chain: uncharacterized protein (259 aa).

Positions 51–173 (GKTHAKIVAN…IAVADGTDMT (123 aa)) constitute an HD domain.

This is an uncharacterized protein from Methanocaldococcus jannaschii (strain ATCC 43067 / DSM 2661 / JAL-1 / JCM 10045 / NBRC 100440) (Methanococcus jannaschii).